Reading from the N-terminus, the 179-residue chain is uncharacterized protein (179 aa).

The region spanning 21 to 109 (QQDAVILVDV…WKQAGLPTVK (89 aa)) is the Rhodanese domain. 2 helical membrane-spanning segments follow: residues 115-135 (ISIMRQVQIIAGSLVLTGVLL) and 138-158 (FVAPGFYFLSGFVGAGLLFAG).

Its subcellular location is the cell membrane. This is an uncharacterized protein from Synechocystis sp. (strain ATCC 27184 / PCC 6803 / Kazusa).